We begin with the raw amino-acid sequence, 583 residues long: Pescadillo (583 aa).

A coiled-coil region spans residues Glu-275–Glu-329. One can recognise a BRCT domain in the interval Lys-323–Leu-416. Disordered stretches follow at residues Arg-448–Ala-526 and Ala-558–Cys-583. Acidic residues predominate over residues Glu-455–Asn-489. A compositionally biased stretch (basic and acidic residues) spans Ala-512–Ala-526.

It belongs to the pescadillo family. As to quaternary structure, component of the PeBoW complex, composed of bop1, pes1 and wdr12. The complex is held together by bop1, which interacts with pes1 via its N-terminal domain and with wdr12 via a high-affinity interaction between the seven-bladed beta-propeller domains of the 2 proteins. The PeBoW complex associates with the 66S pre-ribosome.

It localises to the nucleus. Its subcellular location is the nucleolus. It is found in the nucleoplasm. Component of the PeBoW complex, which is required for maturation of 28S and 5.8S ribosomal RNAs and formation of the 60S ribosome. In Danio rerio (Zebrafish), this protein is Pescadillo (pes).